A 634-amino-acid polypeptide reads, in one-letter code: Nicotinic receptor-associated protein 1 (634 aa).

2 C2 domains span residues 1 to 141 (MNQP…KAHL) and 159 to 295 (KTGS…EILL). Positions 29, 30, 36, 105, 107, 119, 189, 195, 251, 253, and 271 each coordinate Ca(2+). Positions 338-557 (DFAVAVDFTA…LDPDVIQENL (220 aa)) constitute a VWFA domain. Residues 576–603 (RGFQPRPVDDPWRRDSPPPEFDPILDGT) are disordered. Residues 582–592 (PVDDPWRRDSP) show a composition bias toward basic and acidic residues.

It belongs to the copine family. As to quaternary structure, interacts with nicotinic acetylcholine receptor. Ca(2+) serves as cofactor. Expressed in head and tail neurons, ventral cord moto-neurons, body wall muscles and hypodermal cells of the vulva.

It localises to the cell membrane. Its function is as follows. Exhibits calcium-dependent phospholipid binding properties. May function in membrane trafficking. Regulates synaptic levels of nicotinic acetylcholine receptor subunit lev-1 and unc-38 in the nerve cord. Involved in nicotinic acetylcholine receptor (nAChR)-mediated sensitivity to nicotine and levamisole. Affects directional sperm motility. The polypeptide is Nicotinic receptor-associated protein 1 (nra-1) (Caenorhabditis elegans).